The primary structure comprises 572 residues: Methionine--tRNA ligase (572 aa).

The short motif at 11 to 21 is the 'HIGH' region element; the sequence is PYINGIKHLGN. Zn(2+) is bound by residues cysteine 143, cysteine 146, cysteine 156, and cysteine 159. Residues 346-350 carry the 'KMSKS' region motif; that stretch reads QFSTS. Residue threonine 349 participates in ATP binding.

The protein belongs to the class-I aminoacyl-tRNA synthetase family. MetG type 1 subfamily. In terms of assembly, monomer. It depends on Zn(2+) as a cofactor.

It localises to the cytoplasm. The enzyme catalyses tRNA(Met) + L-methionine + ATP = L-methionyl-tRNA(Met) + AMP + diphosphate. Functionally, is required not only for elongation of protein synthesis but also for the initiation of all mRNA translation through initiator tRNA(fMet) aminoacylation. This is Methionine--tRNA ligase from Ruegeria pomeroyi (strain ATCC 700808 / DSM 15171 / DSS-3) (Silicibacter pomeroyi).